The primary structure comprises 1085 residues: Protein IFH1 (1085 aa).

Disordered regions lie at residues 1 to 251 (MAGK…QQAL), 283 to 302 (KNKENNGNEEDKLDSKVMLG), 457 to 493 (SKLKKKEAKKREQEERKQRRKLYKKTQKPSTRTTSNV), 507 to 622 (DDEN…DSSV), 676 to 700 (VDDESTDEDDNLPPPSSRSKNIGSK), and 747 to 774 (QLREQHQRAQTPDVKREGSSNGNNGDEL). Polar residues-rich tracts occupy residues 9–18 (KSTINHSTHS) and 39–48 (RQSPPTLSTT). The span at 54 to 66 (SLIYSSESSLSDV) shows a compositional bias: low complexity. Basic residues predominate over residues 76-85 (NPHKIKRKAK). Positions 120–165 (DGEESENEEEESEEEEEDDDEDDDDDDDDGSDSDSDSETSSDDENI) are enriched in acidic residues. Polar residues predominate over residues 184–197 (AMNTNSNTLYSSRE). Ser208 is subject to Phosphoserine. Basic and acidic residues predominate over residues 209 to 239 (PKKENEEEQKEEKEKEKEEQQKQQESNKKEV). The span at 241 to 251 (GSGTTTTQQAL) shows a compositional bias: polar residues. Basic and acidic residues predominate over residues 283-297 (KNKENNGNEEDKLDS). Basic residues predominate over residues 474 to 483 (QRRKLYKKTQ). Positions 484 to 493 (KPSTRTTSNV) are enriched in polar residues. Residues 513–524 (HKSKKGRHKSGK) are compositionally biased toward basic residues. A compositionally biased stretch (polar residues) spans 546 to 557 (STHSTVLNSGKY). Over residues 584–599 (ETSHDADTDEELRALD) the composition is skewed to basic and acidic residues. Acidic residues-rich tracts occupy residues 607 to 620 (TELDDDYEDDDDDS) and 676 to 686 (VDDESTDEDDN). A compositionally biased stretch (basic and acidic residues) spans 747–764 (QLREQHQRAQTPDVKREG). Residue Ser1041 is modified to Phosphoserine.

The protein belongs to the IFH1 family.

The protein resides in the nucleus. Functionally, transcriptional coactivator that together with FHL1 regulates the expression of rRNA and ribosomal protein genes. Its activity is negatively regulated by environmental stress. This Saccharomyces cerevisiae (strain ATCC 204508 / S288c) (Baker's yeast) protein is Protein IFH1 (IFH1).